The chain runs to 274 residues: Kit ligand (274 aa).

Positions 1-25 are cleaved as a signal peptide; the sequence is MKKTQTWIITCIYLQLLLFNPLVRT. Over 26-215 the chain is Extracellular; the sequence is KGICRNRVTD…ANPLGDSNLQ (190 aa). 2 disulfide bridges follow: C29-C114 and C68-C164. 4 N-linked (GlcNAc...) asparagine glycosylation sites follow: N90, N97, N145, and N196. The helical transmembrane segment at 216 to 238 threads the bilayer; it reads WAAMALPAFFSLVIGFAFGALYW. The Cytoplasmic segment spans residues 239–274; that stretch reads KKKQPNLTRTAENIQINEEDNEISMLQEKEREFQEV.

It belongs to the SCF family. As to quaternary structure, homodimer, non-covalently linked. Heterotetramer with KIT, binding two KIT molecules; thereby mediates KIT dimerization and subsequent activation by autophosphorylation. A soluble form is produced by proteolytic processing of isoform 1 in the extracellular domain.

The protein resides in the cytoplasm. It localises to the cytoskeleton. Its subcellular location is the cell membrane. It is found in the cell projection. The protein localises to the lamellipodium. The protein resides in the filopodium. It localises to the secreted. Its function is as follows. Ligand for the receptor-type protein-tyrosine kinase KIT. Plays an essential role in the regulation of cell survival and proliferation, hematopoiesis, stem cell maintenance, gametogenesis, mast cell development, migration and function, and in melanogenesis. KITLG/SCF binding can activate several signaling pathways. Promotes phosphorylation of PIK3R1, the regulatory subunit of phosphatidylinositol 3-kinase, and subsequent activation of the kinase AKT1. KITLG/SCF and KIT also transmit signals via GRB2 and activation of RAS, RAF1 and the MAP kinases MAPK1/ERK2 and/or MAPK3/ERK1. KITLG/SCF and KIT promote activation of STAT family members STAT1, STAT3 and STAT5. KITLG/SCF and KIT promote activation of PLCG1, leading to the production of the cellular signaling molecules diacylglycerol and inositol 1,4,5-trisphosphate. KITLG/SCF acts synergistically with other cytokines, probably interleukins. This Neovison vison (American mink) protein is Kit ligand (KITLG).